The sequence spans 201 residues: Guanylate kinase (201 aa).

In terms of domain architecture, Guanylate kinase-like spans 10 to 195 (GKIIILSGPS…CVEEVKNILK (186 aa)). 17–24 (GPSGVGKG) provides a ligand contact to ATP.

Belongs to the guanylate kinase family.

It is found in the cytoplasm. The catalysed reaction is GMP + ATP = GDP + ADP. Its function is as follows. Essential for recycling GMP and indirectly, cGMP. The chain is Guanylate kinase from Mycoplasma mobile (strain ATCC 43663 / 163K / NCTC 11711) (Mesomycoplasma mobile).